Reading from the N-terminus, the 94-residue chain is Integration host factor subunit beta (94 aa).

The protein belongs to the bacterial histone-like protein family. As to quaternary structure, heterodimer of an alpha and a beta chain.

This protein is one of the two subunits of integration host factor, a specific DNA-binding protein that functions in genetic recombination as well as in transcriptional and translational control. The chain is Integration host factor subunit beta from Dechloromonas aromatica (strain RCB).